The chain runs to 253 residues: Imidazole glycerol phosphate synthase subunit HisF (253 aa).

Residues aspartate 11 and aspartate 130 contribute to the active site.

This sequence belongs to the HisA/HisF family. Heterodimer of HisH and HisF.

Its subcellular location is the cytoplasm. It carries out the reaction 5-[(5-phospho-1-deoxy-D-ribulos-1-ylimino)methylamino]-1-(5-phospho-beta-D-ribosyl)imidazole-4-carboxamide + L-glutamine = D-erythro-1-(imidazol-4-yl)glycerol 3-phosphate + 5-amino-1-(5-phospho-beta-D-ribosyl)imidazole-4-carboxamide + L-glutamate + H(+). It participates in amino-acid biosynthesis; L-histidine biosynthesis; L-histidine from 5-phospho-alpha-D-ribose 1-diphosphate: step 5/9. IGPS catalyzes the conversion of PRFAR and glutamine to IGP, AICAR and glutamate. The HisF subunit catalyzes the cyclization activity that produces IGP and AICAR from PRFAR using the ammonia provided by the HisH subunit. This chain is Imidazole glycerol phosphate synthase subunit HisF, found in Ruminiclostridium cellulolyticum (strain ATCC 35319 / DSM 5812 / JCM 6584 / H10) (Clostridium cellulolyticum).